The following is a 225-amino-acid chain: UPF0758 protein Sbal223_0402 (225 aa).

Residues 102–224 (VLTNPDLTRD…IVSFAERGWI (123 aa)) enclose the MPN domain. 3 residues coordinate Zn(2+): H173, H175, and D186. Positions 173-186 (HNHPSGIAEPSQAD) match the JAMM motif motif.

This sequence belongs to the UPF0758 family.

This Shewanella baltica (strain OS223) protein is UPF0758 protein Sbal223_0402.